Consider the following 1025-residue polypeptide: Dihydropyrimidine dehydrogenase [NADP(+)] (1025 aa).

The 32-residue stretch at 69 to 100 folds into the 4Fe-4S ferredoxin-type 1 domain; it reads ERGALREAVRCLKCADAPCQKSCPTSLDIKSF. C79, C82, C87, and C91 together coordinate [4Fe-4S] cluster. V129 contacts FAD. Positions 130, 136, 140, and 156 each coordinate [4Fe-4S] cluster. FAD-binding positions include 194–198, 218–226, and R235; these read GAGPA and EKQEYVGGL. NADP(+)-binding positions include 340-343, 364-365, and R371; these read AGDT and RK. K384 carries the N6-acetyllysine modification. NADP(+)-binding positions include 437–439 and 481–487; these read PFG and DVVGMAN. 480–489 is an FAD binding site; sequence GDVVGMANTT. FMN contacts are provided by residues S550 and 574 to 575; that span reads KT. Substrate contacts are provided by residues N609 and 668–670; that span reads NLS. The Proton acceptor role is filled by C671. K709 lines the FMN pocket. 736–737 provides a ligand contact to substrate; it reads NT. Residues G767, 793 to 795, and 816 to 817 contribute to the FMN site; these read TGG and CS. S905 carries the phosphoserine modification. 4Fe-4S ferredoxin-type domains are found at residues 944–976 and 978–1007; these read VVAL…FDPE and HLPT…MVSR. [4Fe-4S] cluster-binding residues include C953, C956, C959, C963, C986, C989, C992, and C996.

Belongs to the dihydropyrimidine dehydrogenase family. In terms of assembly, homodimer. FAD is required as a cofactor. The cofactor is FMN. [4Fe-4S] cluster serves as cofactor.

It localises to the cytoplasm. It catalyses the reaction 5,6-dihydrouracil + NADP(+) = uracil + NADPH + H(+). The enzyme catalyses 5,6-dihydrothymine + NADP(+) = thymine + NADPH + H(+). It participates in amino-acid biosynthesis; beta-alanine biosynthesis. With respect to regulation, inactivated by 5-iodouracil. Involved in pyrimidine base degradation. Catalyzes the reduction of uracil and thymine. Also involved the degradation of the chemotherapeutic drug 5-fluorouracil. The sequence is that of Dihydropyrimidine dehydrogenase [NADP(+)] from Rattus norvegicus (Rat).